Reading from the N-terminus, the 285-residue chain is tRNA U34 carboxymethyltransferase (285 aa).

Carboxy-S-adenosyl-L-methionine is bound by residues K56, W70, K75, G94, 143 to 144 (VE), Y163, and R278.

This sequence belongs to the class I-like SAM-binding methyltransferase superfamily. CmoB family. In terms of assembly, homotetramer.

It carries out the reaction carboxy-S-adenosyl-L-methionine + 5-hydroxyuridine(34) in tRNA = 5-carboxymethoxyuridine(34) in tRNA + S-adenosyl-L-homocysteine + H(+). Catalyzes carboxymethyl transfer from carboxy-S-adenosyl-L-methionine (Cx-SAM) to 5-hydroxyuridine (ho5U) to form 5-carboxymethoxyuridine (cmo5U) at position 34 in tRNAs. The chain is tRNA U34 carboxymethyltransferase from Campylobacter hominis (strain ATCC BAA-381 / DSM 21671 / CCUG 45161 / LMG 19568 / NCTC 13146 / CH001A).